A 435-amino-acid chain; its full sequence is NADH-quinone oxidoreductase subunit D (435 aa).

Belongs to the complex I 49 kDa subunit family. In terms of assembly, NDH-1 is composed of 14 different subunits. Subunits NuoB, C, D, E, F, and G constitute the peripheral sector of the complex.

It is found in the cell membrane. It catalyses the reaction a quinone + NADH + 5 H(+)(in) = a quinol + NAD(+) + 4 H(+)(out). In terms of biological role, NDH-1 shuttles electrons from NADH, via FMN and iron-sulfur (Fe-S) centers, to quinones in the respiratory chain. The immediate electron acceptor for the enzyme in this species is believed to be ubiquinone. Couples the redox reaction to proton translocation (for every two electrons transferred, four hydrogen ions are translocated across the cytoplasmic membrane), and thus conserves the redox energy in a proton gradient. The sequence is that of NADH-quinone oxidoreductase subunit D from Stenotrophomonas maltophilia (strain K279a).